The chain runs to 338 residues: dTDP-glucose 4,6-dehydratase (338 aa).

Residues 12–13 (FI), 33–36 (DKLT), 59–60 (DI), 81–85 (LAAES), and Thr100 each bind NAD(+). A substrate-binding site is contributed by Ser85. Thr134 serves as a coordination point for substrate. The active-site Proton donor is Asp135. Active-site proton acceptor residues include Glu136 and Tyr160. Position 160–164 (160–164 (YSASK)) interacts with NAD(+). Asn189 is a substrate binding site. Position 190 (Asn190) interacts with NAD(+). Substrate contacts are provided by residues 199–200 (KL), 215–217 (PIY), Arg224, Asn259, and 293–297 (DRPGH).

Belongs to the NAD(P)-dependent epimerase/dehydratase family. dTDP-glucose dehydratase subfamily. Homodimer. It depends on NAD(+) as a cofactor.

The enzyme catalyses dTDP-alpha-D-glucose = dTDP-4-dehydro-6-deoxy-alpha-D-glucose + H2O. It functions in the pathway carbohydrate biosynthesis; dTDP-L-rhamnose biosynthesis. It participates in bacterial outer membrane biogenesis; LPS O-antigen biosynthesis. Functionally, catalyzes the dehydration of dTDP-D-glucose to form dTDP-6-deoxy-D-xylo-4-hexulose via a three-step process involving oxidation, dehydration and reduction. This Haemophilus influenzae (strain ATCC 51907 / DSM 11121 / KW20 / Rd) protein is dTDP-glucose 4,6-dehydratase (rffG).